Reading from the N-terminus, the 228-residue chain is Leucokinins (228 aa).

The first 18 residues, 1 to 18 (MAMLLQVALPLLAAVSWG), serve as a signal peptide directing secretion. Positions 19–164 (WELNENDDSL…PRFSPVSAIQ (146 aa)) are excised as a propeptide. Positions 80–118 (EFSENNEAEDKSPTSAQNTQEHIPGNNFPPPAASNPPVN) are disordered. 2 positions are modified to glycine amide: Gly180 and Gly193. Positions 197–209 (NTGRVHRQPKVVI) are excised as a propeptide. Gly217 carries the glycine amide modification. Residues 221-228 (NQKDDNVF) constitute a propeptide that is removed on maturation.

The protein localises to the secreted. In terms of biological role, stimulates both fluid secretion by the Malpighian tubules and hindgut contractions. Depolarize the transepithelial voltage of the Malpighian tubules in concentrations of less than 10(-9) M and increase the frequency of hindgut contractions at concentrations above 10(-8) M. The protein is Leucokinins of Aedes aegypti (Yellowfever mosquito).